Reading from the N-terminus, the 91-residue chain is Small ribosomal subunit protein uS15 (91 aa).

This sequence belongs to the universal ribosomal protein uS15 family. Part of the 30S ribosomal subunit. Forms a bridge to the 50S subunit in the 70S ribosome, contacting the 23S rRNA.

Functionally, one of the primary rRNA binding proteins, it binds directly to 16S rRNA where it helps nucleate assembly of the platform of the 30S subunit by binding and bridging several RNA helices of the 16S rRNA. Its function is as follows. Forms an intersubunit bridge (bridge B4) with the 23S rRNA of the 50S subunit in the ribosome. This chain is Small ribosomal subunit protein uS15, found in Cytophaga hutchinsonii (strain ATCC 33406 / DSM 1761 / CIP 103989 / NBRC 15051 / NCIMB 9469 / D465).